The following is a 254-amino-acid chain: tRNA (guanine-N(7)-)-methyltransferase (254 aa).

Residues 1 to 11 show a composition bias toward basic and acidic residues; sequence MSISDNSREEL. Positions 1 to 25 are disordered; it reads MSISDNSREELGELPAGRPLQSEFN. Positions 83, 108, 135, and 158 each coordinate S-adenosyl-L-methionine. The active site involves Asp-158. Lys-162 provides a ligand contact to substrate. Positions 164 to 169 are interaction with RNA; it reads RHNKRR. Substrate is bound by residues Asp-194 and 232–235; that span reads TKFE.

The protein belongs to the class I-like SAM-binding methyltransferase superfamily. TrmB family.

It catalyses the reaction guanosine(46) in tRNA + S-adenosyl-L-methionine = N(7)-methylguanosine(46) in tRNA + S-adenosyl-L-homocysteine. It functions in the pathway tRNA modification; N(7)-methylguanine-tRNA biosynthesis. Catalyzes the formation of N(7)-methylguanine at position 46 (m7G46) in tRNA. The sequence is that of tRNA (guanine-N(7)-)-methyltransferase from Corynebacterium efficiens (strain DSM 44549 / YS-314 / AJ 12310 / JCM 11189 / NBRC 100395).